We begin with the raw amino-acid sequence, 185 residues long: Ribosome-recycling factor (185 aa).

The protein belongs to the RRF family.

It localises to the cytoplasm. Functionally, responsible for the release of ribosomes from messenger RNA at the termination of protein biosynthesis. May increase the efficiency of translation by recycling ribosomes from one round of translation to another. The chain is Ribosome-recycling factor from Neorickettsia sennetsu (strain ATCC VR-367 / Miyayama) (Ehrlichia sennetsu).